Consider the following 412-residue polypeptide: Peptidase T (412 aa).

Histidine 84 is a Zn(2+) binding site. Aspartate 86 is an active-site residue. Aspartate 146 contacts Zn(2+). Glutamate 179 acts as the Proton acceptor in catalysis. The Zn(2+) site is built by glutamate 180, aspartate 202, and histidine 385.

The protein belongs to the peptidase M20B family. Requires Zn(2+) as cofactor.

It localises to the cytoplasm. The catalysed reaction is Release of the N-terminal residue from a tripeptide.. Cleaves the N-terminal amino acid of tripeptides. This Haemophilus influenzae (strain PittEE) protein is Peptidase T.